The sequence spans 410 residues: Aminopeptidase AmpS (410 aa).

The a divalent metal cation site is built by E250, E316, E340, H345, H378, and D380.

This sequence belongs to the peptidase M29 family. Co(2+) is required as a cofactor. It depends on Zn(2+) as a cofactor. Requires Mg(2+) as cofactor.

Metal-dependent exopeptidase. The polypeptide is Aminopeptidase AmpS (ampS) (Bacillus subtilis (strain 168)).